The chain runs to 105 residues: Guanyl-specific ribonuclease Ms (105 aa).

Disulfide bonds link C3–C11 and C7–C102. The active site involves H39. E57 (proton acceptor) is an active-site residue. Catalysis depends on H91, which acts as the Proton donor.

It belongs to the ribonuclease N1/T1 family.

The catalysed reaction is [RNA] containing guanosine + H2O = an [RNA fragment]-3'-guanosine-3'-phosphate + a 5'-hydroxy-ribonucleotide-3'-[RNA fragment].. This chain is Guanyl-specific ribonuclease Ms, found in Aspergillus phoenicis (Aspergillus saitoi).